An 883-amino-acid polypeptide reads, in one-letter code: Alanine--tRNA ligase (883 aa).

Positions 560, 564, 665, and 669 each coordinate Zn(2+).

This sequence belongs to the class-II aminoacyl-tRNA synthetase family. Requires Zn(2+) as cofactor.

It localises to the cytoplasm. It catalyses the reaction tRNA(Ala) + L-alanine + ATP = L-alanyl-tRNA(Ala) + AMP + diphosphate. Functionally, catalyzes the attachment of alanine to tRNA(Ala) in a two-step reaction: alanine is first activated by ATP to form Ala-AMP and then transferred to the acceptor end of tRNA(Ala). Also edits incorrectly charged Ser-tRNA(Ala) and Gly-tRNA(Ala) via its editing domain. In Mesomycoplasma hyopneumoniae (strain 7448) (Mycoplasma hyopneumoniae), this protein is Alanine--tRNA ligase.